Here is a 344-residue protein sequence, read N- to C-terminus: N,N-dimethyltransferase OxyT (344 aa).

Residues D205 and 231 to 233 (GDF) contribute to the S-adenosyl-L-methionine site.

Belongs to the class I-like SAM-binding methyltransferase superfamily. Cation-independent O-methyltransferase family.

The catalysed reaction is 4-amino-4-dedimethylamino-anhydrotetracycline + S-adenosyl-L-methionine = 4-methylamino-4-dedimethylamino-anhydrotetracycline + S-adenosyl-L-homocysteine + H(+). It carries out the reaction 4-methylamino-4-dedimethylamino-anhydrotetracycline + S-adenosyl-L-methionine = anhydrotetracycline + S-adenosyl-L-homocysteine + H(+). The protein operates within antibiotic biosynthesis; oxytetracycline biosynthesis. Involved in the biosynthesis of the tetracycline antibiotic, oxytetracycline. Catalyzes the dimethylation of 4-amino-4-de(dimethylamino)anhydrotetracycline (4-amino-ATC) to yield anhydrotetracycline (ATC). Also able to catalyze the dimethylation of 7-chloro-, 6-demethyl-, 2-decarboxamido-2-nitrile-, and 4-methylamino-derivatives of 4-amino-4-de(dimethylamino)anhydrotetracycline. The protein is N,N-dimethyltransferase OxyT of Streptomyces rimosus.